Consider the following 396-residue polypeptide: S-adenosylmethionine synthase (396 aa).

Histidine 16 is a binding site for ATP. Aspartate 18 lines the Mg(2+) pocket. Residue glutamate 44 coordinates K(+). 2 residues coordinate L-methionine: glutamate 57 and glutamine 100. The tract at residues glutamine 100–asparagine 110 is flexible loop. Residues aspartate 162 to lysine 164, arginine 228 to phenylalanine 229, aspartate 237, arginine 243 to lysine 244, alanine 260, and lysine 264 contribute to the ATP site. Aspartate 237 lines the L-methionine pocket. Position 268 (lysine 268) interacts with L-methionine.

This sequence belongs to the AdoMet synthase family. As to quaternary structure, homotetramer; dimer of dimers. The cofactor is Mg(2+). Requires K(+) as cofactor.

Its subcellular location is the cytoplasm. The catalysed reaction is L-methionine + ATP + H2O = S-adenosyl-L-methionine + phosphate + diphosphate. It functions in the pathway amino-acid biosynthesis; S-adenosyl-L-methionine biosynthesis; S-adenosyl-L-methionine from L-methionine: step 1/1. Catalyzes the formation of S-adenosylmethionine (AdoMet) from methionine and ATP. The overall synthetic reaction is composed of two sequential steps, AdoMet formation and the subsequent tripolyphosphate hydrolysis which occurs prior to release of AdoMet from the enzyme. The polypeptide is S-adenosylmethionine synthase (Myxococcus xanthus (strain DK1622)).